The chain runs to 86 residues: Cell division topological specificity factor (86 aa).

The protein belongs to the MinE family.

Its function is as follows. Prevents the cell division inhibition by proteins MinC and MinD at internal division sites while permitting inhibition at polar sites. This ensures cell division at the proper site by restricting the formation of a division septum at the midpoint of the long axis of the cell. The protein is Cell division topological specificity factor of Bordetella petrii (strain ATCC BAA-461 / DSM 12804 / CCUG 43448).